Reading from the N-terminus, the 587-residue chain is Dynein axonemal intermediate chain 2 (587 aa).

WD repeat units follow at residues 214 to 254 (RPAS…NPVE), 261 to 302 (SHRD…EPTE), 362 to 401 (GHHG…SSIM), and 405 to 445 (YHTS…NNPS). Disordered regions lie at residues 519–542 (LKER…DMKE) and 562–587 (KEQQ…IVHE).

Belongs to the dynein intermediate chain family. Consists of at least two heavy chains and a number of intermediate and light chains. Interacts with DNAAF2. Interacts with DNAAF6/PIH1D3. Interacts with HEATR2; probably involved in outer arm dynein assembly. Interacts with C16ORF71/DAAP1.

It localises to the cytoplasm. It is found in the cytoskeleton. The protein localises to the cilium axoneme. The protein resides in the dynein axonemal particle. In terms of biological role, part of the dynein complex of multiciliated cell cilia. The sequence is that of Dynein axonemal intermediate chain 2 (dnai2) from Xenopus laevis (African clawed frog).